A 134-amino-acid chain; its full sequence is Small ribosomal subunit protein bS16 (134 aa).

The interval 79 to 134 (AGIAKRPSRNNPTKGEPGKKAQERLALAKQAEEEAAAKAAEAAAAAAAPAEEAASE) is disordered. Residues 115–134 (AKAAEAAAAAAAPAEEAASE) show a composition bias toward low complexity.

The protein belongs to the bacterial ribosomal protein bS16 family.

This chain is Small ribosomal subunit protein bS16, found in Brucella suis (strain ATCC 23445 / NCTC 10510).